The primary structure comprises 150 residues: C-type natriuretic peptide (150 aa).

An N-terminal signal peptide occupies residues 1–31 (MSISSSSSSSSSSSSCLLLISLMLLAASCQG). A propeptide spanning residues 32 to 127 (RPDLQHRNHK…RKMFRGRTKK (96 aa)) is cleaved from the precursor. Low complexity predominate over residues 60-73 (GAADGSSGEEAALS). Residues 60-109 (GAADGSSGEEAALSQRAPPSIRALHPRSGRLGLRDDLEAEPPAENKPRRR) are disordered. Residues cysteine 134 and cysteine 150 are joined by a disulfide bond.

It belongs to the natriuretic peptide family. Expressed in brain, but not in atrium or ventricle.

Its subcellular location is the secreted. In terms of biological role, hormone which plays a role in endochondral ossification through regulation of cartilaginous growth plate chondrocytes proliferation and differentiation. May also be vasoactive and natriuretic. The polypeptide is C-type natriuretic peptide (cnp) (Acipenser transmontanus (White sturgeon)).